Reading from the N-terminus, the 448-residue chain is Portal protein (448 aa).

The interval 1–25 is disordered; sequence MAKRGRKPKELVPGPGSIDPSDVPK.

The protein belongs to the P23virus portal protein family. Homododecamer. Interacts with the capsid protein. Interacts with the terminase large subunit; this interaction allows the packaging of viral DNA.

Its subcellular location is the virion. Its function is as follows. Forms the portal vertex of the capsid. This portal plays critical roles in head assembly, genome packaging, neck/tail attachment, and genome ejection. The portal protein multimerizes as a single ring-shaped homododecamer arranged around a central channel. Forms the portal vertex of the capsid. This portal plays critical roles in head assembly, genome packaging, neck/tail attachment, and genome ejection. This chain is Portal protein, found in Thermus thermophilus (Thermus thermophilus phage P23-45).